Consider the following 403-residue polypeptide: Interferon-induced protein with tetratricopeptide repeats 3 (403 aa).

TPR repeat units lie at residues 94 to 127 (LVTWGNYAWIYYHMGRLSEAQAYVDKVRQVCQKF), 136 to 169 (PELECEEGWTRLKCGRNERAKMCFEKALEEKPKD), 172 to 206 (CSSGMAIAMFRLEEKPEKQFSVDALKQAMELNPQN), and 241 to 274 (TDVLQKAAQFYKKKGNLDRAIELLGKALRSTVNN).

It belongs to the IFIT family. Component of an interferon-dependent multiprotein complex, at least composed of IFIT1, IFIT2 and IFIT3. Interacts with IFIT1 and IFIT2. Interacts (via N-terminus) with MAVS, TBK1, TRAF6 and RIGI. Interacts with COPS5.

It localises to the cytoplasm. The protein localises to the mitochondrion. In terms of biological role, IFN-induced antiviral protein which acts as an inhibitor of cellular as well as viral processes, cell migration, proliferation, signaling, and viral replication. Enhances MAVS-mediated host antiviral responses by serving as an adapter bridging TBK1 to MAVS which leads to the activation of TBK1 and phosphorylation of IRF3 and phosphorylated IRF3 translocates into nucleus to promote antiviral gene transcription. Exhibits an antiproliferative activity via the up-regulation of cell cycle negative regulators CDKN1A/p21 and CDKN1B/p27. Normally, CDKN1B/p27 turnover is regulated by COPS5, which binds CDKN1B/p27 in the nucleus and exports it to the cytoplasm for ubiquitin-dependent degradation. IFIT3 sequesters COPS5 in the cytoplasm, thereby increasing nuclear CDKN1B/p27 protein levels. Up-regulates CDKN1A/p21 by down-regulating MYC, a repressor of CDKN1A/p21. Can negatively regulate the apoptotic effects of IFIT2. The protein is Interferon-induced protein with tetratricopeptide repeats 3 (Ifit3) of Mus musculus (Mouse).